The chain runs to 55 residues: ATP synthase F(0) complex subunit 8 (55 aa).

A helical transmembrane segment spans residues 4–24; sequence LNPAPWFAILVFSWLVFLTVI. Positions 36 to 55 are disordered; it reads EPTSQSTEKTKPEPWNWPWH.

Belongs to the ATPase protein 8 family. Component of the ATP synthase complex composed at least of ATP5F1A/subunit alpha, ATP5F1B/subunit beta, ATP5MC1/subunit c (homooctomer), MT-ATP6/subunit a, MT-ATP8/subunit 8, ATP5ME/subunit e, ATP5MF/subunit f, ATP5MG/subunit g, ATP5MK/subunit k, ATP5MJ/subunit j, ATP5F1C/subunit gamma, ATP5F1D/subunit delta, ATP5F1E/subunit epsilon, ATP5PF/subunit F6, ATP5PB/subunit b, ATP5PD/subunit d, ATP5PO/subunit OSCP. ATP synthase complex consists of a soluble F(1) head domain (subunits alpha(3) and beta(3)) - the catalytic core - and a membrane F(0) domain - the membrane proton channel (subunits c, a, 8, e, f, g, k and j). These two domains are linked by a central stalk (subunits gamma, delta, and epsilon) rotating inside the F1 region and a stationary peripheral stalk (subunits F6, b, d, and OSCP).

It is found in the mitochondrion membrane. Its function is as follows. Subunit 8, of the mitochondrial membrane ATP synthase complex (F(1)F(0) ATP synthase or Complex V) that produces ATP from ADP in the presence of a proton gradient across the membrane which is generated by electron transport complexes of the respiratory chain. ATP synthase complex consist of a soluble F(1) head domain - the catalytic core - and a membrane F(1) domain - the membrane proton channel. These two domains are linked by a central stalk rotating inside the F(1) region and a stationary peripheral stalk. During catalysis, ATP synthesis in the catalytic domain of F(1) is coupled via a rotary mechanism of the central stalk subunits to proton translocation. In vivo, can only synthesize ATP although its ATP hydrolase activity can be activated artificially in vitro. Part of the complex F(0) domain. The sequence is that of ATP synthase F(0) complex subunit 8 from Salvelinus alpinus (Arctic char).